Reading from the N-terminus, the 357-residue chain is UPF0324 membrane protein BMEI1914 (357 aa).

11 consecutive transmembrane segments (helical) span residues 29 to 48 (NILPGLGLSVAITAAAMVLE), 58 to 77 (AWLEALVIAILLGTAVRSLA), 90 to 112 (SAKLLLEIAVVLLGASISASAVI), 117 to 136 (GLIFGIAAVVAVAITLSYGI), 149 to 171 (LVACGNSICGNSAIAAMAPVIGA), 181 to 203 (AFTAILGVIVVLTLPLLVPLLGL), 210 to 232 (ILAGLTVYAVPQVLAATAPVSLL), 242 to 261 (LVRVLMLGPVILVFALISGN), 268 to 290 (PGFFQLVPWFIIGFLAMMALHSL), 300 to 322 (AIQYASMLLTIISMAALGLGVDI), and 334 to 356 (LTAILSLIALCCISLGLIHMLGV).

This sequence belongs to the UPF0324 family.

The protein resides in the cell membrane. This is UPF0324 membrane protein BMEI1914 from Brucella melitensis biotype 1 (strain ATCC 23456 / CCUG 17765 / NCTC 10094 / 16M).